A 396-amino-acid chain; its full sequence is Microcin B17-processing protein McbD (396 aa).

A YcaO domain is found at 41–396 (ASAAGETLKS…VRESKMVPFP (356 aa)).

It localises to the cytoplasm. In terms of biological role, necessary to process the inactive microcin B17 (McbA) precursor into the active peptide. In Escherichia coli, this protein is Microcin B17-processing protein McbD (mcbD).